The following is a 154-amino-acid chain: 6,7-dimethyl-8-ribityllumazine synthase (154 aa).

5-amino-6-(D-ribitylamino)uracil contacts are provided by residues Phe22, 56–58 (AFE), and 81–83 (VLI). Position 86–87 (86–87 (ET)) interacts with (2S)-2-hydroxy-3-oxobutyl phosphate. His89 functions as the Proton donor in the catalytic mechanism. A 5-amino-6-(D-ribitylamino)uracil-binding site is contributed by Leu114. A (2S)-2-hydroxy-3-oxobutyl phosphate-binding site is contributed by Arg128.

This sequence belongs to the DMRL synthase family.

It carries out the reaction (2S)-2-hydroxy-3-oxobutyl phosphate + 5-amino-6-(D-ribitylamino)uracil = 6,7-dimethyl-8-(1-D-ribityl)lumazine + phosphate + 2 H2O + H(+). It participates in cofactor biosynthesis; riboflavin biosynthesis; riboflavin from 2-hydroxy-3-oxobutyl phosphate and 5-amino-6-(D-ribitylamino)uracil: step 1/2. Functionally, catalyzes the formation of 6,7-dimethyl-8-ribityllumazine by condensation of 5-amino-6-(D-ribitylamino)uracil with 3,4-dihydroxy-2-butanone 4-phosphate. This is the penultimate step in the biosynthesis of riboflavin. This is 6,7-dimethyl-8-ribityllumazine synthase from Chlamydia pneumoniae (Chlamydophila pneumoniae).